Consider the following 155-residue polypeptide: Putative pre-16S rRNA nuclease (155 aa).

This sequence belongs to the YqgF nuclease family.

It localises to the cytoplasm. Its function is as follows. Could be a nuclease involved in processing of the 5'-end of pre-16S rRNA. The protein is Putative pre-16S rRNA nuclease of Paramagnetospirillum magneticum (strain ATCC 700264 / AMB-1) (Magnetospirillum magneticum).